The primary structure comprises 289 residues: Prepilin leader peptidase/N-methyltransferase (289 aa).

The helical transmembrane segment at 13-33 (AFVLCALVLGLLVGSFLNVVI) threads the bilayer. Residues cysteine 72, cysteine 75, cysteine 97, and cysteine 100 each contribute to the Zn(2+) site. 5 consecutive transmembrane segments (helical) span residues 128–148 (FSWQ…MSMI), 159–179 (LVLP…FASL), 183–203 (LWGA…FKLV), 228–248 (VLPL…TVML), and 256–276 (GTPI…LLWG).

Belongs to the peptidase A24 family. The cofactor is Zn(2+).

Its subcellular location is the cell inner membrane. The enzyme catalyses Typically cleaves a -Gly-|-Phe- bond to release an N-terminal, basic peptide of 5-8 residues from type IV prepilin, and then N-methylates the new N-terminal amino group, the methyl donor being S-adenosyl-L-methionine.. Its function is as follows. Plays an essential role in type IV pili and type II pseudopili formation by proteolytically removing the leader sequence from substrate proteins and subsequently monomethylating the alpha-amino group of the newly exposed N-terminal phenylalanine. This Stutzerimonas stutzeri (Pseudomonas stutzeri) protein is Prepilin leader peptidase/N-methyltransferase (pilD).